Here is a 220-residue protein sequence, read N- to C-terminus: Glycerol-3-phosphate acyltransferase (220 aa).

6 consecutive transmembrane segments (helical) span residues 11-31 (INVI…GYAL), 70-90 (LLIL…SKLF), 96-116 (LQWM…FLNF), 127-147 (GSVV…WFFV), 153-173 (ISSL…FFVP), and 193-213 (MVLI…NLLA).

This sequence belongs to the PlsY family. Probably interacts with PlsX.

The protein localises to the cell inner membrane. It carries out the reaction an acyl phosphate + sn-glycerol 3-phosphate = a 1-acyl-sn-glycero-3-phosphate + phosphate. It participates in lipid metabolism; phospholipid metabolism. Its function is as follows. Catalyzes the transfer of an acyl group from acyl-phosphate (acyl-PO(4)) to glycerol-3-phosphate (G3P) to form lysophosphatidic acid (LPA). This enzyme utilizes acyl-phosphate as fatty acyl donor, but not acyl-CoA or acyl-ACP. The protein is Glycerol-3-phosphate acyltransferase of Helicobacter acinonychis (strain Sheeba).